The primary structure comprises 92 residues: uncharacterized protein (92 aa).

This is an uncharacterized protein from Pseudoalteromonas phage PM2 (Bacteriophage PM2).